A 278-amino-acid polypeptide reads, in one-letter code: Urease accessory protein UreD (278 aa).

The protein belongs to the UreD family. UreD, UreF and UreG form a complex that acts as a GTP-hydrolysis-dependent molecular chaperone, activating the urease apoprotein by helping to assemble the nickel containing metallocenter of UreC. The UreE protein probably delivers the nickel.

The protein localises to the cytoplasm. Required for maturation of urease via the functional incorporation of the urease nickel metallocenter. The polypeptide is Urease accessory protein UreD (Pseudomonas putida (strain ATCC 700007 / DSM 6899 / JCM 31910 / BCRC 17059 / LMG 24140 / F1)).